Here is a 272-residue protein sequence, read N- to C-terminus: ATP phosphoribosyltransferase regulatory subunit (272 aa).

This sequence belongs to the class-II aminoacyl-tRNA synthetase family. HisZ subfamily. In terms of assembly, heteromultimer composed of HisG and HisZ subunits.

It localises to the cytoplasm. It participates in amino-acid biosynthesis; L-histidine biosynthesis; L-histidine from 5-phospho-alpha-D-ribose 1-diphosphate: step 1/9. Functionally, required for the first step of histidine biosynthesis. May allow the feedback regulation of ATP phosphoribosyltransferase activity by histidine. This Staphylococcus aureus (strain USA300) protein is ATP phosphoribosyltransferase regulatory subunit.